The following is an 879-amino-acid chain: Alanine--tRNA ligase (879 aa).

The Zn(2+) site is built by His566, His570, Cys668, and His672.

The protein belongs to the class-II aminoacyl-tRNA synthetase family. Zn(2+) is required as a cofactor.

The protein resides in the cytoplasm. The catalysed reaction is tRNA(Ala) + L-alanine + ATP = L-alanyl-tRNA(Ala) + AMP + diphosphate. Functionally, catalyzes the attachment of alanine to tRNA(Ala) in a two-step reaction: alanine is first activated by ATP to form Ala-AMP and then transferred to the acceptor end of tRNA(Ala). Also edits incorrectly charged Ser-tRNA(Ala) and Gly-tRNA(Ala) via its editing domain. The polypeptide is Alanine--tRNA ligase (Listeria monocytogenes serotype 4b (strain F2365)).